A 420-amino-acid polypeptide reads, in one-letter code: 3-isopropylmalate dehydratase large subunit (420 aa).

[4Fe-4S] cluster contacts are provided by C300, C360, and C363.

It belongs to the aconitase/IPM isomerase family. LeuC type 2 subfamily. Heterodimer of LeuC and LeuD. [4Fe-4S] cluster serves as cofactor.

The enzyme catalyses (2R,3S)-3-isopropylmalate = (2S)-2-isopropylmalate. The protein operates within amino-acid biosynthesis; L-leucine biosynthesis; L-leucine from 3-methyl-2-oxobutanoate: step 2/4. Catalyzes the isomerization between 2-isopropylmalate and 3-isopropylmalate, via the formation of 2-isopropylmaleate. The chain is 3-isopropylmalate dehydratase large subunit from Clostridium kluyveri (strain ATCC 8527 / DSM 555 / NBRC 12016 / NCIMB 10680 / K1).